The sequence spans 432 residues: Gamma-glutamyl phosphate reductase (432 aa).

The protein belongs to the gamma-glutamyl phosphate reductase family.

It localises to the cytoplasm. It carries out the reaction L-glutamate 5-semialdehyde + phosphate + NADP(+) = L-glutamyl 5-phosphate + NADPH + H(+). It functions in the pathway amino-acid biosynthesis; L-proline biosynthesis; L-glutamate 5-semialdehyde from L-glutamate: step 2/2. Catalyzes the NADPH-dependent reduction of L-glutamate 5-phosphate into L-glutamate 5-semialdehyde and phosphate. The product spontaneously undergoes cyclization to form 1-pyrroline-5-carboxylate. The sequence is that of Gamma-glutamyl phosphate reductase from Ruminiclostridium cellulolyticum (strain ATCC 35319 / DSM 5812 / JCM 6584 / H10) (Clostridium cellulolyticum).